The chain runs to 181 residues: ATP synthase subunit delta (181 aa).

Belongs to the ATPase delta chain family. F-type ATPases have 2 components, F(1) - the catalytic core - and F(0) - the membrane proton channel. F(1) has five subunits: alpha(3), beta(3), gamma(1), delta(1), epsilon(1). F(0) has three main subunits: a(1), b(2) and c(10-14). The alpha and beta chains form an alternating ring which encloses part of the gamma chain. F(1) is attached to F(0) by a central stalk formed by the gamma and epsilon chains, while a peripheral stalk is formed by the delta and b chains.

The protein resides in the cell inner membrane. F(1)F(0) ATP synthase produces ATP from ADP in the presence of a proton or sodium gradient. F-type ATPases consist of two structural domains, F(1) containing the extramembraneous catalytic core and F(0) containing the membrane proton channel, linked together by a central stalk and a peripheral stalk. During catalysis, ATP synthesis in the catalytic domain of F(1) is coupled via a rotary mechanism of the central stalk subunits to proton translocation. In terms of biological role, this protein is part of the stalk that links CF(0) to CF(1). It either transmits conformational changes from CF(0) to CF(1) or is implicated in proton conduction. The protein is ATP synthase subunit delta of Protochlamydia amoebophila (strain UWE25).